The primary structure comprises 390 residues: tRNA(Met) cytidine acetate ligase (390 aa).

Residues 7-20 (VVEYNPFHNGHKLH), G101, N162, and R187 contribute to the ATP site.

Belongs to the TmcAL family.

The protein localises to the cytoplasm. It catalyses the reaction cytidine(34) in elongator tRNA(Met) + acetate + ATP = N(4)-acetylcytidine(34) in elongator tRNA(Met) + AMP + diphosphate. Functionally, catalyzes the formation of N(4)-acetylcytidine (ac(4)C) at the wobble position of elongator tRNA(Met), using acetate and ATP as substrates. First activates an acetate ion to form acetyladenylate (Ac-AMP) and then transfers the acetyl group to tRNA to form ac(4)C34. The protein is tRNA(Met) cytidine acetate ligase of Listeria monocytogenes serotype 4a (strain HCC23).